Here is a 270-residue protein sequence, read N- to C-terminus: NAD kinase (270 aa).

The active-site Proton acceptor is the aspartate 45. NAD(+)-binding positions include 45–46, 121–122, lysine 147, aspartate 149, 160–165, and alanine 184; these read DG, NE, and TAYSKS.

Belongs to the NAD kinase family. A divalent metal cation is required as a cofactor.

It localises to the cytoplasm. It catalyses the reaction NAD(+) + ATP = ADP + NADP(+) + H(+). Its function is as follows. Involved in the regulation of the intracellular balance of NAD and NADP, and is a key enzyme in the biosynthesis of NADP. Catalyzes specifically the phosphorylation on 2'-hydroxyl of the adenosine moiety of NAD to yield NADP. This chain is NAD kinase, found in Lactobacillus johnsonii (strain CNCM I-12250 / La1 / NCC 533).